Consider the following 586-residue polypeptide: Pyruvate kinase (586 aa).

Residue Arg32 coordinates substrate. 4 residues coordinate K(+): Asn34, Ser36, Asp66, and Thr67. Asn34–His37 contributes to the ATP binding site. ATP-binding residues include Arg73 and Lys156. Glu222 contributes to the Mg(2+) binding site. Substrate is bound by residues Gly245, Asp246, and Thr278. Asp246 provides a ligand contact to Mg(2+).

This sequence belongs to the pyruvate kinase family. The protein in the C-terminal section; belongs to the PEP-utilizing enzyme family. Mg(2+) is required as a cofactor. The cofactor is K(+).

The enzyme catalyses pyruvate + ATP = phosphoenolpyruvate + ADP + H(+). It functions in the pathway carbohydrate degradation; glycolysis; pyruvate from D-glyceraldehyde 3-phosphate: step 5/5. The polypeptide is Pyruvate kinase (pyk) (Staphylococcus haemolyticus (strain JCSC1435)).